A 98-amino-acid polypeptide reads, in one-letter code: uncharacterized protein (98 aa).

The 55-residue stretch at 37–91 folds into the HTH cro/C1-type domain; it reads LITSRQQLGISQKQLETLSGVKQPMIARIEKGQTNPQLETLLKLLAPLGKTLSIV. Positions 48–67 form a DNA-binding region, H-T-H motif; that stretch reads QKQLETLSGVKQPMIARIEK.

This is an uncharacterized protein from Haemophilus influenzae (strain ATCC 51907 / DSM 11121 / KW20 / Rd).